The following is a 475-amino-acid chain: 3-hydroxyacyl-CoA dehydrogenase-like protein LAM1 (475 aa).

Glycine 99 to alanine 104 contacts NAD(+). CoA is bound at residue lysine 149. Asparagine 245 provides a ligand contact to NAD(+).

The protein belongs to the 3-hydroxyacyl-CoA dehydrogenase family.

The protein operates within mycotoxin biosynthesis. Its function is as follows. 3-hydroxyacyl-CoA dehydrogenase-like protein; part of the Tox1A locus, one of the 2 loci that mediate the biosynthesis of T-toxin, a family of linear polyketides 37 to 45 carbons in length, of which the major component is 41 carbons, and which leads to high virulence to maize. One of the PKSs (PKS1 or PKS2) could synthesize a precursor, used subsequently by the other PKS as starter unit, to add additional carbons. Variability in the length of the final carbon backbone C35-47 could be achieved by varying the number of condensation cycles, or use of different starter or extender units or might be due to decarboxylation of the penultimate product, catalyzed by DEC1. Additional proteins are required for the biosynthesis of T-toxin, including oxidoreductases RED1, RED2, RED3, LAM1 and OXI1, as well as esterase TOX9. The sequence is that of 3-hydroxyacyl-CoA dehydrogenase-like protein LAM1 from Cochliobolus heterostrophus (strain C4 / ATCC 48331 / race T) (Southern corn leaf blight fungus).